We begin with the raw amino-acid sequence, 106 residues long: uncharacterized protein (106 aa).

This is an uncharacterized protein from Escherichia coli O6:H1 (strain CFT073 / ATCC 700928 / UPEC).